Here is a 790-residue protein sequence, read N- to C-terminus: Pleckstrin homology domain-containing family G member 6 (790 aa).

Residues 63-91 (SGQARGLSPMRLRDPEPEKRHGGHVGAGL) form a disordered region. Over residues 73–82 (RLRDPEPEKR) the composition is skewed to basic and acidic residues. The 193-residue stretch at 161–353 (HQQEALWELL…ESFLRHINGQ (193 aa)) folds into the DH domain. The PH domain occupies 409–509 (QLLLEGPVRV…WLEKTQQAQA (101 aa)). Composition is skewed to basic and acidic residues over residues 529 to 538 (LYRDQDRESP) and 625 to 635 (ELRDIPLRPHP). Disordered regions lie at residues 529–677 (LYRD…ASER), 690–730 (LRGQ…HTSL), and 748–790 (SQRI…ASEV). A compositionally biased stretch (basic and acidic residues) spans 748–762 (SQRIEGAEEPRDSRP).

As to quaternary structure, interacts with MYH10. Interacts with ELMO1 and EZR (in an open conformation). Interacts with CSPP1. In terms of tissue distribution, highest expression in the placenta. Low levels in small intestine, lung, liver, kidney, thymus and heart.

Its subcellular location is the cell projection. It localises to the microvillus. The protein localises to the cytoplasm. The protein resides in the cytoskeleton. It is found in the spindle. Its subcellular location is the spindle pole. It localises to the cleavage furrow. Guanine nucleotide exchange factor activating the small GTPase RHOA, which, in turn, induces myosin filament formation. Also activates RHOG. Does not activate RAC1, or to a much lower extent than RHOA and RHOG. Part of a functional unit, involving PLEKHG6, MYH10 and RHOA, at the cleavage furrow to advance furrow ingression during cytokinesis. In epithelial cells, required for the formation of microvilli and membrane ruffles on the apical pole. Along with EZR, required for normal macropinocytosis. In Homo sapiens (Human), this protein is Pleckstrin homology domain-containing family G member 6 (PLEKHG6).